We begin with the raw amino-acid sequence, 186 residues long: Testis-expressed protein 29 (186 aa).

The Extracellular segment spans residues 1-56; the sequence is MKDTKEIKRSPPHLLKKFAVCDIPLYDICDYNVTRERCRSLDCCFYRGVCYEKAVP. A helical transmembrane segment spans residues 57–77; the sequence is IYVQVFFTLIWFVAGAFIIAV. At 78 to 151 the chain is on the cytoplasmic side; that stretch reads IYRVIQGTKK…AGCCLWMKSK (74 aa). Disordered regions lie at residues 104-138 and 151-186; these read SPTPELIPEPIPEPIPEPIPEPIREPPPPVKKTES and KPAKDQPQKETAAPEPPSNPEVKKVNSGSAVPQAAP. Pro residues predominate over residues 108 to 133; sequence ELIPEPIPEPIPEPIPEPIREPPPPV.

The protein resides in the membrane. This is Testis-expressed protein 29 (Tex29) from Mus musculus (Mouse).